We begin with the raw amino-acid sequence, 658 residues long: DNA mismatch repair protein MutL (658 aa).

Disordered stretches follow at residues 114–137 (RQND…PTAA) and 437–456 (RFGN…PLSD). Residues 442–456 (PSETPAPQTDTPLSD) are compositionally biased toward polar residues.

Belongs to the DNA mismatch repair MutL/HexB family.

Functionally, this protein is involved in the repair of mismatches in DNA. It is required for dam-dependent methyl-directed DNA mismatch repair. May act as a 'molecular matchmaker', a protein that promotes the formation of a stable complex between two or more DNA-binding proteins in an ATP-dependent manner without itself being part of a final effector complex. This chain is DNA mismatch repair protein MutL, found in Neisseria meningitidis serogroup B (strain ATCC BAA-335 / MC58).